The chain runs to 204 residues: Probable nicotinate-nucleotide adenylyltransferase (204 aa).

Belongs to the NadD family.

It catalyses the reaction nicotinate beta-D-ribonucleotide + ATP + H(+) = deamido-NAD(+) + diphosphate. It participates in cofactor biosynthesis; NAD(+) biosynthesis; deamido-NAD(+) from nicotinate D-ribonucleotide: step 1/1. Catalyzes the reversible adenylation of nicotinate mononucleotide (NaMN) to nicotinic acid adenine dinucleotide (NaAD). The protein is Probable nicotinate-nucleotide adenylyltransferase of Clostridium beijerinckii (strain ATCC 51743 / NCIMB 8052) (Clostridium acetobutylicum).